A 398-amino-acid polypeptide reads, in one-letter code: Dual-specificity RNA methyltransferase RlmN (398 aa).

Catalysis depends on glutamate 119, which acts as the Proton acceptor. Residues 125–364 (EADRATLCVS…TIVRKTRGDD (240 aa)) form the Radical SAM core domain. Cysteine 132 and cysteine 369 form a disulfide bridge. [4Fe-4S] cluster contacts are provided by cysteine 139, cysteine 143, and cysteine 146. S-adenosyl-L-methionine is bound by residues 193 to 194 (GE), serine 225, 247 to 249 (SLH), and asparagine 326. The active-site S-methylcysteine intermediate is the cysteine 369.

This sequence belongs to the radical SAM superfamily. RlmN family. [4Fe-4S] cluster serves as cofactor.

It is found in the cytoplasm. It catalyses the reaction adenosine(2503) in 23S rRNA + 2 reduced [2Fe-2S]-[ferredoxin] + 2 S-adenosyl-L-methionine = 2-methyladenosine(2503) in 23S rRNA + 5'-deoxyadenosine + L-methionine + 2 oxidized [2Fe-2S]-[ferredoxin] + S-adenosyl-L-homocysteine. The catalysed reaction is adenosine(37) in tRNA + 2 reduced [2Fe-2S]-[ferredoxin] + 2 S-adenosyl-L-methionine = 2-methyladenosine(37) in tRNA + 5'-deoxyadenosine + L-methionine + 2 oxidized [2Fe-2S]-[ferredoxin] + S-adenosyl-L-homocysteine. Functionally, specifically methylates position 2 of adenine 2503 in 23S rRNA and position 2 of adenine 37 in tRNAs. m2A2503 modification seems to play a crucial role in the proofreading step occurring at the peptidyl transferase center and thus would serve to optimize ribosomal fidelity. The polypeptide is Dual-specificity RNA methyltransferase RlmN (Yersinia pseudotuberculosis serotype IB (strain PB1/+)).